The sequence spans 196 residues: Pyridoxal 5'-phosphate synthase subunit PdxT (196 aa).

47 to 49 (GES) serves as a coordination point for L-glutamine. Cys-79 functions as the Nucleophile in the catalytic mechanism. Residues Arg-106 and 134-135 (IR) each bind L-glutamine. Catalysis depends on charge relay system residues His-170 and Glu-172.

It belongs to the glutaminase PdxT/SNO family. In terms of assembly, in the presence of PdxS, forms a dodecamer of heterodimers. Only shows activity in the heterodimer.

It catalyses the reaction aldehydo-D-ribose 5-phosphate + D-glyceraldehyde 3-phosphate + L-glutamine = pyridoxal 5'-phosphate + L-glutamate + phosphate + 3 H2O + H(+). It carries out the reaction L-glutamine + H2O = L-glutamate + NH4(+). It functions in the pathway cofactor biosynthesis; pyridoxal 5'-phosphate biosynthesis. Functionally, catalyzes the hydrolysis of glutamine to glutamate and ammonia as part of the biosynthesis of pyridoxal 5'-phosphate. The resulting ammonia molecule is channeled to the active site of PdxS. The sequence is that of Pyridoxal 5'-phosphate synthase subunit PdxT from Bacillus anthracis (strain A0248).